The primary structure comprises 421 residues: Testin (421 aa).

Residues 92–199 (MILTNPVAAK…GDVKLPCEMD (108 aa)) form the PET domain. The disordered stretch occupies residues 133-164 (EKQPVAGSEGAQYRKKQLAKQLPAHDQDPSKC). Over residues 155–164 (PAHDQDPSKC) the composition is skewed to basic and acidic residues. 3 consecutive LIM zinc-binding domains span residues 234–297 (YSCY…CDSE), 299–359 (PRCA…NHAV), and 362–421 (QGCH…KMMS).

This sequence belongs to the prickle / espinas / testin family. As to quaternary structure, interacts via LIM domain 1 with ZYX. Interacts (via LIM domain 3) with ENAH and VASP. Interacts with ALKBH4, talin, actin, alpha-actinin, GRIP1 and PXN. Interacts (via LIM domain 2) with ACTL7A (via N-terminus). Heterodimer with ACTL7A; the heterodimer interacts with ENAH to form a heterotrimer.

The protein localises to the cytoplasm. The protein resides in the cell junction. Its subcellular location is the focal adhesion. Scaffold protein that may play a role in cell adhesion, cell spreading and in the reorganization of the actin cytoskeleton. Plays a role in the regulation of cell proliferation. May act as a tumor suppressor. This Aotus nancymaae (Ma's night monkey) protein is Testin (TES).